Here is a 138-residue protein sequence, read N- to C-terminus: Large ribosomal subunit protein uL16c (138 aa).

Belongs to the universal ribosomal protein uL16 family. In terms of assembly, part of the 50S ribosomal subunit.

Its subcellular location is the plastid. It localises to the chloroplast. This chain is Large ribosomal subunit protein uL16c, found in Emiliania huxleyi (Coccolithophore).